We begin with the raw amino-acid sequence, 171 residues long: NADH-quinone oxidoreductase subunit I (171 aa).

4Fe-4S ferredoxin-type domains lie at 63 to 92 (RRYE…IESD) and 102 to 131 (TRYD…ETQI). Cys-72, Cys-75, Cys-78, Cys-82, Cys-111, Cys-114, Cys-117, and Cys-121 together coordinate [4Fe-4S] cluster.

This sequence belongs to the complex I 23 kDa subunit family. As to quaternary structure, NDH-1 is composed of 14 different subunits. Subunits NuoA, H, J, K, L, M, N constitute the membrane sector of the complex. The cofactor is [4Fe-4S] cluster.

It localises to the cell inner membrane. It catalyses the reaction a quinone + NADH + 5 H(+)(in) = a quinol + NAD(+) + 4 H(+)(out). In terms of biological role, NDH-1 shuttles electrons from NADH, via FMN and iron-sulfur (Fe-S) centers, to quinones in the respiratory chain. The immediate electron acceptor for the enzyme in this species is believed to be ubiquinone. Couples the redox reaction to proton translocation (for every two electrons transferred, four hydrogen ions are translocated across the cytoplasmic membrane), and thus conserves the redox energy in a proton gradient. This chain is NADH-quinone oxidoreductase subunit I, found in Paracidovorax citrulli (strain AAC00-1) (Acidovorax citrulli).